The chain runs to 136 residues: Antistasin (136 aa).

The N-terminal stretch at 1–17 (MIKLAILLLFTVAIVRC) is a signal peptide. Residue Gln18 is modified to Pyrrolidone carboxylic acid. 10 cysteine pairs are disulfide-bonded: Cys25–Cys36, Cys30–Cys43, Cys45–Cys65, Cys50–Cys68, Cys54–Cys70, Cys79–Cys90, Cys84–Cys97, Cys99–Cys120, Cys105–Cys123, and Cys109–Cys125. One can recognise an Antistasin-like 1 domain in the interval 45–70 (CSGVRCRMHCPHGFQRSRYGCEFCKC). The region spanning 100 to 125 (KIDINCRKTCPNGLKRDKLGCEYCEC) is the Antistasin-like 2 domain. Heparin contacts are provided by residues 114–117 (KRDK) and 128–135 (KRKLIPRL).

It belongs to the protease inhibitor I15 (antistasin) family.

It is found in the secreted. This highly disulfide-bonded protein is a potent inhibitor of factor Xa. May have therapeutic utility as an anticoagulant. Also exhibits a strong metastatic activity. In Haementeria officinalis (Mexican leech), this protein is Antistasin.